The sequence spans 110 residues: Nucleoprotein (110 aa).

Residues 1–24 form a disordered region; that stretch reads MASRRSRPQAASFRNGRRRQPTSY.

Belongs to the arteriviridae nucleocapsid family.

It localises to the virion. The protein is Nucleoprotein (N) of Equine arteritis virus (strain Bucyrus) (EAV).